The sequence spans 382 residues: Serine/threonine-protein kinase (382 aa).

Residues 1-10 are compositionally biased toward basic and acidic residues; it reads MENKQCDHLT. Positions 1–75 are disordered; it reads MENKQCDHLT…ASESDEDDDD (75 aa). Polar residues predominate over residues 12–24; it reads WFSTTSDASESMD. The segment covering 45 to 75 has biased composition (acidic residues); it reads ADEDLYSDISEGDLEYSDCDSASESDEDDDD. One can recognise a Protein kinase domain in the interval 93–379; sequence YTVIKTLTPG…AEELLSYPMF (287 aa). ATP-binding positions include 99-107 and Lys-122; that span reads LTPGSEGRV. Asp-207 (proton acceptor) is an active-site residue.

This sequence belongs to the protein kinase superfamily. Ser/Thr protein kinase family.

The catalysed reaction is L-seryl-[protein] + ATP = O-phospho-L-seryl-[protein] + ADP + H(+). It catalyses the reaction L-threonyl-[protein] + ATP = O-phospho-L-threonyl-[protein] + ADP + H(+). This chain is Serine/threonine-protein kinase (US2), found in Equus caballus (Horse).